The primary structure comprises 330 residues: tRNA-modifying protein YgfZ (330 aa).

Folate contacts are provided by tryptophan 28 and tryptophan 190.

This sequence belongs to the tRNA-modifying YgfZ family.

Its subcellular location is the cytoplasm. Folate-binding protein involved in regulating the level of ATP-DnaA and in the modification of some tRNAs. It is probably a key factor in regulatory networks that act via tRNA modification, such as initiation of chromosomal replication. The protein is tRNA-modifying protein YgfZ of Yersinia pseudotuberculosis serotype IB (strain PB1/+).